Consider the following 473-residue polypeptide: MLWAHCGRFLRYHLLPLLLCRLPFLLFFQRPQWAHGLDIVEEDEWLREIQGATYQLSIVRQAMQHAGFQVRAASVMTRRNAVDLDRPPLWSGSLPHLPVYDVRSPRPLRPPSSQHHAVSPELPSRNGIRWQYQELQYLVEEQRRRNQSRNAIPRPSFPPPDPPSQPAEDARDADAERAESPHTAESTVSHDASDNAVRRRHERRRYNALTVRSRDSLLLTRIRFSNQRCFGRGRLRHPAGSGPNTGGPRPGGAGLRQLRQQLTVRWQLFRLRCHGWTQQVSSQIRTRWEESNVVSQTATRVRTWFVQRTTLWRRTWVPGQNPAAEAQELAIIPPAPTVLRQNEEPRQQLTGEETRNSTHTQREEVEDVSREGAREGNDGSRASGNDERRNNAGRYDDDHEVQEPQVTYPAGQGELNRRSQEENEEGGPCESPPMTTNTLTVACPPREPPHRALFRLCLGLWVSSYLVRRPMTI.

Positions 1-35 (MLWAHCGRFLRYHLLPLLLCRLPFLLFFQRPQWAH) are cleaved as a signal peptide. 3 disordered regions span residues 142-201 (QRRR…RRRH), 232-254 (RGRL…GGAG), and 331-437 (IIPP…MTTN). A compositionally biased stretch (pro residues) spans 155-165 (PSFPPPDPPSQ). Basic and acidic residues predominate over residues 168–182 (EDARDADAERAESPH). Gly residues predominate over residues 243-254 (PNTGGPRPGGAG). Over residues 341-397 (QNEEPRQQLTGEETRNSTHTQREEVEDVSREGAREGNDGSRASGNDERRNNAGRYDD) the composition is skewed to basic and acidic residues.

The protein belongs to the HHV-5 UL13 protein family. As to quaternary structure, interacts with host MICOS complex subunits IMMT and CHCHD3.

The protein resides in the host mitochondrion. Plays an essential role during infection by modulating mitochondrial ultrastructure and thereby increasing bioenergetic potential. Mechanistically, alters cristae architecture by interacting with components of the host mitochondrial contact site and cristae organizing system (MICOS) complex. This is an uncharacterized protein from Human cytomegalovirus (strain Merlin) (HHV-5).